A 187-amino-acid polypeptide reads, in one-letter code: Isopentenyl-diphosphate Delta-isomerase (187 aa).

3 residues coordinate Mn(2+): His-36, His-43, and His-80. One can recognise a Nudix hydrolase domain in the interval 41–178 (VRHRAFTALL…RQLRLCPWFE (138 aa)). Glu-98 provides a ligand contact to Mg(2+). Mn(2+) is bound by residues Glu-127 and Glu-129. The active site involves Glu-129.

The protein belongs to the IPP isomerase type 1 family. Requires Mg(2+) as cofactor. Mn(2+) is required as a cofactor.

It localises to the cytoplasm. The catalysed reaction is isopentenyl diphosphate = dimethylallyl diphosphate. Its pathway is isoprenoid biosynthesis; dimethylallyl diphosphate biosynthesis; dimethylallyl diphosphate from isopentenyl diphosphate: step 1/1. In terms of biological role, catalyzes the 1,3-allylic rearrangement of the homoallylic substrate isopentenyl (IPP) to its highly electrophilic allylic isomer, dimethylallyl diphosphate (DMAPP). In Haloarcula marismortui (strain ATCC 43049 / DSM 3752 / JCM 8966 / VKM B-1809) (Halobacterium marismortui), this protein is Isopentenyl-diphosphate Delta-isomerase.